Here is a 525-residue protein sequence, read N- to C-terminus: FNIP repeat-containing protein DDB_G0274617 (525 aa).

The FNIP repeat unit spans residues 65 to 107 (YQHEIKKEMLPSSIISIIFYNIKNILSSDSIPDTVKFLGFNGY).

The sequence is that of FNIP repeat-containing protein DDB_G0274617 from Dictyostelium discoideum (Social amoeba).